Reading from the N-terminus, the 703-residue chain is Protein O-mannosyl-transferase TMEM260 (703 aa).

A run of 8 helical transmembrane segments spans residues 20 to 40, 68 to 88, 90 to 110, 137 to 157, 182 to 202, 218 to 238, 314 to 334, and 352 to 372; these read GALR…TLTL, PLFT…SVAY, VNLL…YTVF, IAAE…ALTV, SLCN…WILF, LTLA…SSYL, KSSV…FFAW, and FWLQ…ATLV. Residues Asn-403 and Asn-564 are each glycosylated (N-linked (GlcNAc...) asparagine).

It belongs to the glycosyltransferase 117 (GT117) family.

The protein resides in the endoplasmic reticulum membrane. It carries out the reaction a di-trans,poly-cis-dolichyl beta-D-mannosyl phosphate + L-seryl-[protein] = 3-O-(alpha-D-mannosyl)-L-seryl-[protein] + a di-trans,poly-cis-dolichyl phosphate + H(+). The enzyme catalyses a di-trans,poly-cis-dolichyl beta-D-mannosyl phosphate + L-threonyl-[protein] = 3-O-(alpha-D-mannosyl)-L-threonyl-[protein] + a di-trans,poly-cis-dolichyl phosphate + H(+). In terms of biological role, O-mannosyl-transferase that transfers mannosyl residues to the hydroxyl group of serine or threonine residues of proteins. Specifically glycosylates the IPT/TIG domain of target proteins, such as MET and MST1R/RON. TMEM260-mediated O-mannosylated residues are composed of single mannose glycans that are not elongated or modified. The sequence is that of Protein O-mannosyl-transferase TMEM260 from Mus musculus (Mouse).